Reading from the N-terminus, the 221-residue chain is METEAIENIPRVCLPQIGAPAPDFKANSTFGPIKLSDYRGKWVVLFSHPGDFTPVCTTEFIAFTQVYTSFVERNVQLIGLSVDSNPSHLAWVENIYKTTGVEIPFPIIEDKDMRIAKLYGMISPAETSTSAVRAVFIIDDKQILRLILYYPLEIGRNIQEIIRIIDALQTVDKYKVLAPANWYPGMPVIVPPPKTYPELKQRLKNVEGYTCTDWYLCYKKV.

The Thioredoxin domain maps to 15–170 (PQIGAPAPDF…IIRIIDALQT (156 aa)). The active-site Cysteine sulfenic acid (-SOH) intermediate is the C56. R133 serves as a coordination point for substrate. C211 and C217 form a disulfide bridge.

This sequence belongs to the peroxiredoxin family. Prx6 subfamily. In terms of assembly, homodecamer. Pentamer of dimers that assemble into a ring structure.

It is found in the cytoplasm. It catalyses the reaction a hydroperoxide + [thioredoxin]-dithiol = an alcohol + [thioredoxin]-disulfide + H2O. Thiol-specific peroxidase that catalyzes the reduction of hydrogen peroxide and organic hydroperoxides to water and alcohols, respectively. Plays a role in cell protection against oxidative stress by detoxifying peroxides. This Caldanaerobacter subterraneus subsp. tengcongensis (strain DSM 15242 / JCM 11007 / NBRC 100824 / MB4) (Thermoanaerobacter tengcongensis) protein is Peroxiredoxin 2.